The sequence spans 373 residues: tRNA (guanine(26)-N(2))-dimethyltransferase (373 aa).

The Trm1 methyltransferase domain maps to 2 to 365; it reads KIISEGETKL…AELSDLVVLI (364 aa). The S-adenosyl-L-methionine site is built by R35, R66, D86, D113, and A114.

The protein belongs to the class I-like SAM-binding methyltransferase superfamily. Trm1 family.

The enzyme catalyses guanosine(26) in tRNA + 2 S-adenosyl-L-methionine = N(2)-dimethylguanosine(26) in tRNA + 2 S-adenosyl-L-homocysteine + 2 H(+). Dimethylates a single guanine residue at position 26 of a number of tRNAs using S-adenosyl-L-methionine as donor of the methyl groups. This Methanococcus maripaludis (strain C6 / ATCC BAA-1332) protein is tRNA (guanine(26)-N(2))-dimethyltransferase.